Here is a 103-residue protein sequence, read N- to C-terminus: Histone H4 (103 aa).

A compositionally biased stretch (gly residues) spans Met-1–Gly-14. The segment at Met-1–Arg-20 is disordered. An N6-acetyl-N6-methyllysine; alternate mark is found at Lys-6 and Lys-13. A DNA-binding region spans residues Lys-17–Lys-21.

Belongs to the histone H4 family. As to quaternary structure, the nucleosome is a histone octamer containing two molecules each of H2A, H2B, H3 and H4 assembled in one H3-H4 heterotetramer and two H2A-H2B heterodimers. The octamer wraps approximately 147 bp of DNA.

The protein localises to the nucleus. It localises to the chromosome. Its function is as follows. Core component of nucleosome. Nucleosomes wrap and compact DNA into chromatin, limiting DNA accessibility to the cellular machineries which require DNA as a template. Histones thereby play a central role in transcription regulation, DNA repair, DNA replication and chromosomal stability. DNA accessibility is regulated via a complex set of post-translational modifications of histones, also called histone code, and nucleosome remodeling. The chain is Histone H4 from Trichogramma cacaeciae (Moth egg parasite).